The chain runs to 254 residues: Ribosomal RNA large subunit methyltransferase E (254 aa).

Residues 1 to 18 (MTNSGKTGGKSGKGGTGG) show a composition bias toward gly residues. Residues 1 to 26 (MTNSGKTGGKSGKGGTGGARALKVRV) are disordered. The S-adenosyl-L-methionine site is built by Gly89, Trp91, Asp119, Asp135, and Asp159. Lys199 (proton acceptor) is an active-site residue.

The protein belongs to the class I-like SAM-binding methyltransferase superfamily. RNA methyltransferase RlmE family.

It localises to the cytoplasm. The catalysed reaction is uridine(2552) in 23S rRNA + S-adenosyl-L-methionine = 2'-O-methyluridine(2552) in 23S rRNA + S-adenosyl-L-homocysteine + H(+). Its function is as follows. Specifically methylates the uridine in position 2552 of 23S rRNA at the 2'-O position of the ribose in the fully assembled 50S ribosomal subunit. The chain is Ribosomal RNA large subunit methyltransferase E from Parvibaculum lavamentivorans (strain DS-1 / DSM 13023 / NCIMB 13966).